Consider the following 123-residue polypeptide: Small ribosomal subunit protein uS12 (123 aa).

The tract at residues 1 to 28 (MPTIQQLIRKPRQPKVKRSKSQHLEQCP) is disordered. A compositionally biased stretch (basic residues) spans 9–21 (RKPRQPKVKRSKS). At D89 the chain carries 3-methylthioaspartic acid.

Belongs to the universal ribosomal protein uS12 family. As to quaternary structure, part of the 30S ribosomal subunit. Contacts proteins S8 and S17. May interact with IF1 in the 30S initiation complex.

Its function is as follows. With S4 and S5 plays an important role in translational accuracy. Functionally, interacts with and stabilizes bases of the 16S rRNA that are involved in tRNA selection in the A site and with the mRNA backbone. Located at the interface of the 30S and 50S subunits, it traverses the body of the 30S subunit contacting proteins on the other side and probably holding the rRNA structure together. The combined cluster of proteins S8, S12 and S17 appears to hold together the shoulder and platform of the 30S subunit. This is Small ribosomal subunit protein uS12 from Ruegeria pomeroyi (strain ATCC 700808 / DSM 15171 / DSS-3) (Silicibacter pomeroyi).